The primary structure comprises 98 residues: NADH-ubiquinone oxidoreductase chain 4L (98 aa).

3 consecutive transmembrane segments (helical) span residues 1–21 (MSLVYMNIIMAFTTSLVGLLM), 29–49 (SLLCLEGMMLSLFIMATLIIL), and 61–81 (IILLVFAACEAALGLSLLVMV).

This sequence belongs to the complex I subunit 4L family. As to quaternary structure, core subunit of respiratory chain NADH dehydrogenase (Complex I) which is composed of 45 different subunits.

It is found in the mitochondrion inner membrane. The enzyme catalyses a ubiquinone + NADH + 5 H(+)(in) = a ubiquinol + NAD(+) + 4 H(+)(out). Functionally, core subunit of the mitochondrial membrane respiratory chain NADH dehydrogenase (Complex I) which catalyzes electron transfer from NADH through the respiratory chain, using ubiquinone as an electron acceptor. Part of the enzyme membrane arm which is embedded in the lipid bilayer and involved in proton translocation. This Hippopotamus amphibius (Hippopotamus) protein is NADH-ubiquinone oxidoreductase chain 4L (MT-ND4L).